Consider the following 372-residue polypeptide: Pre-small/secreted glycoprotein (372 aa).

An N-terminal signal peptide occupies residues M1–S32. N-linked (GlcNAc...) asparagine; by host glycosylation occurs at N40. 2 disulfide bridges follow: C108–C135 and C121–C147. N204, N208, N238, N257, and N268 each carry an N-linked (GlcNAc...) asparagine; by host glycan. The disordered stretch occupies residues M320–R340.

This sequence belongs to the filoviruses glycoprotein family. As to quaternary structure, homodimer; disulfide-linked. The homodimers are linked by two disulfide bonds in a parallel orientation. Monomer. This precursor is processed into mature sGP and delta-peptide by host furin or furin-like proteases. The cleavage site corresponds to the furin optimal cleavage sequence [KR]-X-[KR]-R. In terms of processing, N-glycosylated. Post-translationally, O-glycosylated.

It is found in the secreted. Functionally, seems to possess an anti-inflammatory activity as it can reverse the barrier-decreasing effects of TNF alpha. Might therefore contribute to the lack of inflammatory reaction seen during infection in spite the of extensive necrosis and massive virus production. Does not seem to be involved in activation of primary macrophages. Does not seem to interact specifically with neutrophils. Its function is as follows. Viroporin that permeabilizes mammalian cell plasma membranes. It acts by altering permeation of ionic compounds and small molecules. This activity may lead to viral enterotoxic activity. The polypeptide is Pre-small/secreted glycoprotein (GP) (Sudan ebolavirus (strain Boniface-76) (SEBOV)).